A 61-amino-acid chain; its full sequence is MRCLPVFVILLLLIASVPSDAVQLKTKDDMPLPSFNGNARRTPRMLSNKRICCYPNVWCCD.

A signal peptide spans 1 to 21; it reads MRCLPVFVILLLLIASVPSDA. Residues 22–48 constitute a propeptide that is removed on maturation; the sequence is VQLKTKDDMPLPSFNGNARRTPRMLSN. 6'-bromotryptophan is present on Trp-58.

This sequence belongs to the conotoxin T superfamily. Contains 2 disulfide bonds that can be either 'C1-C3, C2-C4' or 'C1-C4, C2-C3', since these disulfide connectivities have been observed for conotoxins with cysteine framework V (for examples, see AC P0DQQ7 and AC P81755). In terms of processing, contains 2 disulfide bonds. As to expression, expressed by the venom duct.

It is found in the secreted. This is Conotoxin 3 from Conus textile (Cloth-of-gold cone).